A 91-amino-acid chain; its full sequence is MKLTCVMIVAVLFLTAWTFVTADDPRDGPDTAVGWRKLFSEARDEMKNREASKLNERGCIEDKKYCGILPFANSGVCCSYLCIFVCVPKAP.

The N-terminal stretch at 1 to 22 (MKLTCVMIVAVLFLTAWTFVTA) is a signal peptide. Positions 23–57 (DDPRDGPDTAVGWRKLFSEARDEMKNREASKLNER) are excised as a propeptide. 3 cysteine pairs are disulfide-bonded: cysteine 59–cysteine 78, cysteine 66–cysteine 82, and cysteine 77–cysteine 86.

Belongs to the conotoxin O1 superfamily. In terms of tissue distribution, expressed by the venom duct.

It is found in the secreted. The sequence is that of Conotoxin VnMKLT1-021 from Conus ventricosus (Mediterranean cone).